The chain runs to 377 residues: Molybdenum import ATP-binding protein ModC (377 aa).

In terms of domain architecture, ABC transporter spans 4 to 240 (IAPRSIRGEF…PALPLATARD (237 aa)). 38 to 45 (GPSGCGKS) is an ATP binding site. In terms of domain architecture, Mop spans 299 to 369 (RTSILNILPA…IKGVALAPER (71 aa)).

The protein belongs to the ABC transporter superfamily. Molybdate importer (TC 3.A.1.8) family. As to quaternary structure, the complex is composed of two ATP-binding proteins (ModC), two transmembrane proteins (ModB) and a solute-binding protein (ModA).

The protein localises to the cell inner membrane. The catalysed reaction is molybdate(out) + ATP + H2O = molybdate(in) + ADP + phosphate + H(+). Functionally, part of the ABC transporter complex ModABC involved in molybdenum import. Responsible for energy coupling to the transport system. This chain is Molybdenum import ATP-binding protein ModC, found in Rhodopseudomonas palustris (strain HaA2).